The primary structure comprises 302 residues: tRNA dimethylallyltransferase (302 aa).

10–17 serves as a coordination point for ATP; that stretch reads GPTAIGKT. 12–17 contacts substrate; it reads TAIGKT. The tract at residues 35–38 is interaction with substrate tRNA; that stretch reads DSRQ.

This sequence belongs to the IPP transferase family. In terms of assembly, monomer. It depends on Mg(2+) as a cofactor.

The catalysed reaction is adenosine(37) in tRNA + dimethylallyl diphosphate = N(6)-dimethylallyladenosine(37) in tRNA + diphosphate. Catalyzes the transfer of a dimethylallyl group onto the adenine at position 37 in tRNAs that read codons beginning with uridine, leading to the formation of N6-(dimethylallyl)adenosine (i(6)A). This chain is tRNA dimethylallyltransferase, found in Christiangramia forsetii (strain DSM 17595 / CGMCC 1.15422 / KT0803) (Gramella forsetii).